The chain runs to 257 residues: Acyl-[acyl-carrier-protein]--UDP-N-acetylglucosamine O-acyltransferase (257 aa).

This sequence belongs to the transferase hexapeptide repeat family. LpxA subfamily. In terms of assembly, homotrimer.

The protein localises to the cytoplasm. It carries out the reaction a (3R)-hydroxyacyl-[ACP] + UDP-N-acetyl-alpha-D-glucosamine = a UDP-3-O-[(3R)-3-hydroxyacyl]-N-acetyl-alpha-D-glucosamine + holo-[ACP]. It participates in glycolipid biosynthesis; lipid IV(A) biosynthesis; lipid IV(A) from (3R)-3-hydroxytetradecanoyl-[acyl-carrier-protein] and UDP-N-acetyl-alpha-D-glucosamine: step 1/6. Involved in the biosynthesis of lipid A, a phosphorylated glycolipid that anchors the lipopolysaccharide to the outer membrane of the cell. The polypeptide is Acyl-[acyl-carrier-protein]--UDP-N-acetylglucosamine O-acyltransferase (Anaeromyxobacter dehalogenans (strain 2CP-1 / ATCC BAA-258)).